A 245-amino-acid polypeptide reads, in one-letter code: MADS-box transcription factor 55 (245 aa).

An MADS-box domain is found at 1 to 61 (MARERREIRR…GKLSQFASSN (61 aa)). The region spanning 109–199 (LQLEHSKCSS…RDQMPQVPTA (91 aa)) is the K-box domain. A disordered region spans residues 197-245 (PTAGLAVPDTENVLTEDGQSSESVMTALNSGSSQDNDDGSDISLKLGLP). Residues 213-224 (DGQSSESVMTAL) show a composition bias toward polar residues.

Expressed in roots, shoots and developing panicles. Expressed in shoots.

The protein localises to the nucleus. Its function is as follows. Transcription factor that acts as a negative regulator of brassinosteroid signaling. This chain is MADS-box transcription factor 55 (MADS55), found in Oryza sativa subsp. japonica (Rice).